Here is a 121-residue protein sequence, read N- to C-terminus: Holin-like protein CidA (121 aa).

3 helical membrane passes run 27 to 47 (VHLPIPGSIIGIFLLLISLKF), 58 to 78 (GADFLLKELILFFIPSAVAVI), and 89 to 109 (IDLIFIIMISTLCVTLVTGIL).

It belongs to the CidA/LrgA family. CidA subfamily.

It is found in the cell membrane. Functionally, increases the activity of extracellular murein hydrolases possibly by mediating their export via hole formation. Inhibited by the antiholin-like proteins LrgAB. In an unstressed cell, the LrgAB products probably inhibit the function of the CidA protein. When a cell is stressed by the addition of antibiotics or by other factors in the environment, CidA possibly oligomerizes within the bacterial cell membrane, creating lesions that disrupt the proton motive force, which in turn results in loss of cell viability. These lesions are also hypothesized to regulate the subsequent cell lysis by either allowing the murein hydrolases access to the cell wall substrate and/or regulating their activity by a possible change in the cell wall pH that results from loss of membrane potential. The sequence is that of Holin-like protein CidA from Bacillus cytotoxicus (strain DSM 22905 / CIP 110041 / 391-98 / NVH 391-98).